Reading from the N-terminus, the 304-residue chain is E3 ubiquitin-protein ligase RNF144B (304 aa).

The TRIAD supradomain stretch occupies residues 27 to 245 (PLVTCKLCLC…YDRGPCRNKL (219 aa)). Zn(2+) contacts are provided by C31, C34, C54, C57, C122, C127, C146, C149, C154, C157, H162, C167, C194, and C197. Residues 31 to 81 (CKLCLCEQSLDKMTTLQECRCIFCTACLKQYMQLAIREGCGSPITCPDMVC) form an RING-type 1 zinc finger. The IBR-type zinc finger occupies 102–167 (QLYQRLKFER…KDAWHAEVSC (66 aa)). The segment at 194 to 223 (CPVCRVYIERNEGCAQMMCKNCKHTFCWYC) adopts an RING-type 2; atypical zinc-finger fold. C207 is an active-site residue. Positions 212, 215, 220, 223, 235, and 241 each coordinate Zn(2+). A helical membrane pass occupies residues 259 to 279 (VVGILVGLGIIALVTSPLLLL).

Belongs to the RBR family. RNF144 subfamily. In terms of assembly, interacts with UBE2L3, UBE2L6 and LCMT2, as well as with BAX. Interacts with TBK1; this interaction inhibits TBK1 phosphorylation and 'Lys-63'-linked polyubiquitination. In terms of processing, auto-ubiquitinated.

The protein resides in the mitochondrion membrane. It localises to the cytoplasm. The catalysed reaction is [E2 ubiquitin-conjugating enzyme]-S-ubiquitinyl-L-cysteine + [acceptor protein]-L-lysine = [E2 ubiquitin-conjugating enzyme]-L-cysteine + [acceptor protein]-N(6)-ubiquitinyl-L-lysine.. The protein operates within protein modification; protein ubiquitination. Its function is as follows. E3 ubiquitin-protein ligase which accepts ubiquitin from E2 ubiquitin-conjugating enzymes UBE2L3 and UBE2L6 in the form of a thioester and then directly transfers the ubiquitin to targeted substrates such as LCMT2, thereby promoting their degradation. Induces apoptosis via a p53/TP53-dependent but caspase-independent mechanism. Plays a crucial role in maintaining the genomic stability by controlling the degradation of multiple proteins involved in mitotic progression and DNA damage. Regulates epithelial homeostasis by mediating degradation of CDKN1A and isoform 2 of TP63. Plays a regulatory role in innate immunity by negatively regulating IRF3 activation and IFN-beta production. Mechanistically, inhibits TBK1 phosphorylation and 'Lys-63'-linked polyubiquitination independently of its E3 ligase activity. Alternatively, promotes 'Lys-27' and 'Lys-33'-linked ubiquitination of IFIH1/MDA5, promoting selective autophagic degradation of IFIH1/MDA5 to inhibit antiviral response. The polypeptide is E3 ubiquitin-protein ligase RNF144B (RNF144B) (Bos taurus (Bovine)).